The following is a 407-amino-acid chain: RNA-binding motif, single-stranded-interacting protein 2 (407 aa).

Methionine 1 is modified (N-acetylmethionine). Residues 14 to 51 form a disordered region; sequence FGYNKNNKKPYVSLSQQMAPPSPSSSTPNSSSGSTAHD. Over residues 37–47 the composition is skewed to low complexity; it reads SSSTPNSSSGS. 2 RRM domains span residues 56–129 and 135–220; these read TNLY…MAKQ and TNLY…FADG. Serine 106 bears the Phosphoserine mark. Phosphoserine is present on residues serine 280 and serine 285. Over residues 374 to 392 the composition is skewed to low complexity; that stretch reads PSSSVSVEESGSQQSQVPV. Residues 374-398 form a disordered region; it reads PSSSVSVEESGSQQSQVPVDAPSEH.

It localises to the nucleus. The protein is RNA-binding motif, single-stranded-interacting protein 2 (RBMS2) of Bos taurus (Bovine).